The chain runs to 418 residues: Phosphopentomutase (418 aa).

The Mn(2+) site is built by aspartate 10, aspartate 297, histidine 302, aspartate 338, histidine 339, and histidine 350.

This sequence belongs to the phosphopentomutase family. The cofactor is Mn(2+).

It localises to the cytoplasm. The enzyme catalyses 2-deoxy-alpha-D-ribose 1-phosphate = 2-deoxy-D-ribose 5-phosphate. The catalysed reaction is alpha-D-ribose 1-phosphate = D-ribose 5-phosphate. It functions in the pathway carbohydrate degradation; 2-deoxy-D-ribose 1-phosphate degradation; D-glyceraldehyde 3-phosphate and acetaldehyde from 2-deoxy-alpha-D-ribose 1-phosphate: step 1/2. In terms of biological role, isomerase that catalyzes the conversion of deoxy-ribose 1-phosphate (dRib-1-P) and ribose 1-phosphate (Rib-1-P) to deoxy-ribose 5-phosphate (dRib-5-P) and ribose 5-phosphate (Rib-5-P), respectively. The protein is Phosphopentomutase of Chromohalobacter salexigens (strain ATCC BAA-138 / DSM 3043 / CIP 106854 / NCIMB 13768 / 1H11).